The sequence spans 523 residues: MVHWADYMAEKIIKERGEKEEYVVESGITPSGYVHVGNFRELFTAYIVGHALRDRGYNVRHIHMWDDYDRFRKVPKNVPQEWEEYLGMPVSEVPDPWGCHDSYAEHFMGLFEEEVAKLEMDVEFLRASELYKKGEYAEEIRKAFEAKGKIMAILNKYREVAKQPPLPENWWPAMVYCPEHRKESEIIDWDGEWGVKYRCPEGHEGWTDIRDGNVKLRWRVDWPMRWAHFGVDFEPAGKDHLAAGSSYDTGKEIIREVYGKEAPLTLMYEFVGIKGQKGKMSGSKGNVILLSDLYEVLEPGLVRFIYAKHRPNKEIRIDLGLGLLNLYDEFDRVERIYFGIEKGKGDEEELKRTYELSVPKKPKRLVAQAPFRFLAVLVQLPHLSIEDIIFTLVKQGHVPENLTQEDIDRIKLRIKLAKNWVEKYAPEEVKFKILSVPGVSEVDPTIREAMLEVAEWLESHEDFAVDELNNILFEVAKKRNIPSKVWFSTLYKLFIGKDRGPKLANFLAALDREFVVRRLRLEG.

Positions 30–38 (PSGYVHVGN) match the 'HIGH' region motif. Residues Asp95, Cys99, His100, His106, Cys177, His180, Cys199, and His203 each coordinate Zn(2+). Residues 279–283 (KMSGS) carry the 'KMSKS' region motif.

Belongs to the class-I aminoacyl-tRNA synthetase family. The cofactor is Zn(2+).

It is found in the cytoplasm. The enzyme catalyses tRNA(Lys) + L-lysine + ATP = L-lysyl-tRNA(Lys) + AMP + diphosphate. This Pyrococcus furiosus (strain ATCC 43587 / DSM 3638 / JCM 8422 / Vc1) protein is Lysine--tRNA ligase (lysS).